The following is a 193-amino-acid chain: Ribosome maturation factor RimM (193 aa).

The region spanning Asp-100 to Gly-173 is the PRC barrel domain.

Belongs to the RimM family. As to quaternary structure, binds ribosomal protein uS19.

Its subcellular location is the cytoplasm. Its function is as follows. An accessory protein needed during the final step in the assembly of 30S ribosomal subunit, possibly for assembly of the head region. Essential for efficient processing of 16S rRNA. May be needed both before and after RbfA during the maturation of 16S rRNA. It has affinity for free ribosomal 30S subunits but not for 70S ribosomes. This is Ribosome maturation factor RimM from Rhizobium etli (strain CIAT 652).